The chain runs to 260 residues: Type III pantothenate kinase (260 aa).

6–13 contacts ATP; the sequence is DVGNTNIT. Substrate is bound at residue 107–110; that stretch reads GADR. The Proton acceptor role is filled by Asp-109. Asp-129 serves as a coordination point for K(+). Thr-132 is an ATP binding site. Position 184 (Thr-184) interacts with substrate.

The protein belongs to the type III pantothenate kinase family. Homodimer. The cofactor is NH4(+). K(+) is required as a cofactor.

Its subcellular location is the cytoplasm. It carries out the reaction (R)-pantothenate + ATP = (R)-4'-phosphopantothenate + ADP + H(+). It functions in the pathway cofactor biosynthesis; coenzyme A biosynthesis; CoA from (R)-pantothenate: step 1/5. Functionally, catalyzes the phosphorylation of pantothenate (Pan), the first step in CoA biosynthesis. This chain is Type III pantothenate kinase, found in Agathobacter rectalis (strain ATCC 33656 / DSM 3377 / JCM 17463 / KCTC 5835 / VPI 0990) (Eubacterium rectale).